Here is a 612-residue protein sequence, read N- to C-terminus: Dihydroxy-acid dehydratase (612 aa).

Position 81 (D81) interacts with Mg(2+). Residue C122 participates in [2Fe-2S] cluster binding. 2 residues coordinate Mg(2+): D123 and K124. Residue K124 is modified to N6-carboxylysine. [2Fe-2S] cluster is bound at residue C195. E491 is a Mg(2+) binding site. S517 acts as the Proton acceptor in catalysis.

The protein belongs to the IlvD/Edd family. In terms of assembly, homodimer. Requires [2Fe-2S] cluster as cofactor. It depends on Mg(2+) as a cofactor.

The catalysed reaction is (2R)-2,3-dihydroxy-3-methylbutanoate = 3-methyl-2-oxobutanoate + H2O. It carries out the reaction (2R,3R)-2,3-dihydroxy-3-methylpentanoate = (S)-3-methyl-2-oxopentanoate + H2O. Its pathway is amino-acid biosynthesis; L-isoleucine biosynthesis; L-isoleucine from 2-oxobutanoate: step 3/4. It participates in amino-acid biosynthesis; L-valine biosynthesis; L-valine from pyruvate: step 3/4. Its function is as follows. Functions in the biosynthesis of branched-chain amino acids. Catalyzes the dehydration of (2R,3R)-2,3-dihydroxy-3-methylpentanoate (2,3-dihydroxy-3-methylvalerate) into 2-oxo-3-methylpentanoate (2-oxo-3-methylvalerate) and of (2R)-2,3-dihydroxy-3-methylbutanoate (2,3-dihydroxyisovalerate) into 2-oxo-3-methylbutanoate (2-oxoisovalerate), the penultimate precursor to L-isoleucine and L-valine, respectively. This is Dihydroxy-acid dehydratase from Haemophilus influenzae (strain PittEE).